The following is a 631-amino-acid chain: MSKSHAAYIDYALRRTTNMPVEMMGTDVVRLKDYQHFVARVFLGLDSMHSLLLFHETGVGKTMTTVYILKHLKDIYTNWAIILLVKKALIEDPWMNTILRYAPEITKDCIFINYDDQNFRNKFFTNIKTINSKSRICVIIDECHNFISKSLIKEDGKIRPTRSVYNFLSKTIALKNHKMICLSATPIVNSVQEFTMLVNLLRPGSLQHQSLFENKRLVNEKELVSKLGGLCSYIVNNEFSIFDDVEGSASFAKKTVLMRYVNMSKKQEEIYQKAKLTEIKTGISSFRILRRMATTFTFDSFPERQNRDPGEYAQEIATLYNDFKRSLRDREFSKSALDTFKKGELLGGDASAADISLFTELKEKSAKFIDVCLGILASHGKCLVFEPFVNQSGIEILLLYFKVFGISNIEFSSRTKDTRIKAVAEFNQESNTNGECIKTCVFSSSGGEGISFFSINDIFILDMTWNEASLRQIVGRAIRLNSHVLTPPERRYVNVHFIMARLSNGMPTVDEDLFEIIQSKSKEFVQLFRVFKHTSLEWIHANEKDFSPIDNESGWKTLVSRAIDLSSKKNITNKLIEGTNIWYSNSNRLMSINRGFKGVDGRVYDVDGNYLHDMPDNPVIKIHDGKLIYIF.

In terms of domain architecture, Helicase ATP-binding spans 42–204; sequence FLGLDSMHSL…TMLVNLLRPG (163 aa). An ATP-binding site is contributed by 55-62; that stretch reads HETGVGKT. A DEXH box motif is present at residues 141–144; it reads DECH. The region spanning 367–532 is the Helicase C-terminal domain; that stretch reads KFIDVCLGIL…EFVQLFRVFK (166 aa). A binding to the cap-specific mRNA (nucleoside-2'-O-)-methyltransferase region spans residues 457–524; the sequence is DIFILDMTWN…EIIQSKSKEF (68 aa).

It belongs to the helicase family. NPH I subfamily. In terms of assembly, monomer. Interacts (via C-terminus) with RAP94/OPG109 (via N-terminus). Interacts with the cap-specific mRNA (nucleoside-2'-O-)-methyltransferase OPG102.

Its subcellular location is the virion. It catalyses the reaction a ribonucleoside 5'-triphosphate + H2O = a ribonucleoside 5'-diphosphate + phosphate + H(+). Functionally, DNA-dependent ATPase that acts as a 5' to 3' translocase on single-stranded DNA and thereby plays a role in transcription termination of viral early genes. Uses forward translocation in concert with the viral RNA polymerase RAP94/OPG109 subunit and the capping enzyme/VTF to catalyze release of UUUUUNU-containing nascent RNA from the elongation complex. In addition, acts as a positive elongation factor to assist transcription through problematic sequences. The chain is Nucleoside triphosphatase I (OPG123) from Variola virus (isolate Human/India/Ind3/1967) (VARV).